A 3165-amino-acid chain; its full sequence is Protein eyes shut homolog (3165 aa).

Residues 1-21 form the signal peptide; it reads MTDKSIVILSLMVFHSSFING. The N-linked (GlcNAc...) asparagine glycan is linked to N166. EGF-like domains are found at residues 170-212, 213-254, and 256-292; these read KQQF…KYCQ, ELDA…KNCS, and IIGQ…PFCE. 9 disulfides stabilise this stretch: C174-C189, C183-C200, C202-C211, C217-C228, C222-C242, C244-C253, C260-C270, C265-C280, and C282-C291. N269 and N272 each carry an N-linked (GlcNAc...) asparagine glycan. 2 N-linked (GlcNAc...) asparagine glycosylation sites follow: N311 and N343. 2 consecutive EGF-like domains span residues 332-368 and 370-406; these read DVSE…LLCK and IQTS…KNCE. 4 disulfide bridges follow: C341–C356, C358–C367, C374–C385, and C396–C405. N-linked (GlcNAc...) asparagine glycosylation is found at N506 and N566. EGF-like domains are found at residues 567–602 and 643–679; these read TTDD…RLCV and DTED…TQCE. 46 cysteine pairs are disulfide-bonded: C575–C590, C592–C601, C669–C678, C685–C696, C690–C705, C707–C719, C737–C748, C742–C757, C759–C768, C775–C786, C780–C795, C797–C806, C813–C824, C818–C835, C837–C846, C853–C866, C860–C876, C878–C887, C894–C905, C899–C914, C916–C925, C932–C943, C937–C952, C954–C963, C970–C981, C975–C990, C992–C1001, C1008–C1019, C1013–C1028, C1030–C1039, C1046–C1056, C1051–C1065, C1067–C1076, C1083–C1094, C1088–C1103, C1105–C1114, C1121–C1137, C1131–C1147, C1149–C1158, C1165–C1176, C1170–C1185, C1187–C1196, C2037–C2063, C2103–C2114, C2108–C2128, and C2130–C2139. An EGF-like 8; calcium-binding domain is found at 681-720; it reads DIDECASHPCKNGATCIDQPGNYFCQCVPPFKVVDGFSCL. Positions 733-769 constitute an EGF-like 9; calcium-binding domain; sequence DIDDCILNACEHNSTCKDLHLSYQCVCLSDWEGNFCE. The EGF-like 10; calcium-binding domain maps to 771–807; sequence ESNECKMNPCKNNSTCTDLYKSYRCECTSGWTGQNCS. EGF-like domains follow at residues 809–847, 849–888, and 890–926; these read EINE…QFCH, RYNL…KNCE, and DVKD…SLCE. Positions 928–964 constitute an EGF-like 14; calcium-binding domain; the sequence is EINECSSEPCKNNGTCVDLTNRFFCNCEPEYHGPFCE. An EGF-like 15 domain is found at 966-1002; the sequence is DVNKCKISPCLDEENCVYRTDGYNCLCAPGYTGINCE. In terms of domain architecture, EGF-like 16; calcium-binding spans 1004 to 1040; sequence NLDECLSEPCLHDGVCIDGINHYTCDCKSGFFGTHCE. EGF-like domains are found at residues 1042–1077, 1079–1115, and 1117–1159; these read NAND…TQCK, KIND…AYCE, and SIDN…QFCE. Positions 1161–1197 constitute an EGF-like 20; calcium-binding domain; the sequence is NINECSSSPCLHGADCEDHINGYVCKCQPGWSGHHCE. Positions 1883–2063 constitute a Laminin G-like 1 domain; the sequence is FSCVRYYGDS…AVKNYHINNC (181 aa). The 42-residue stretch at 2099–2140 folds into the EGF-like 21 domain; sequence APSVCQQDVCHNGGTCHAIFLSSGIVSFQCDCPLHFTGRFCE. Positions 2145–2339 constitute a Laminin G-like 2 domain; that stretch reads LFFPSFNGNS…NIENCHVPWC (195 aa). A glycan (N-linked (GlcNAc...) asparagine) is linked at N2170. 2 EGF-like domains span residues 2335 to 2368 and 2371 to 2408; these read HVPW…YSGK and QFAS…PLCT. 19 disulfide bridges follow: C2339–C2350, C2344–C2359, C2375–C2386, C2380–C2396, C2398–C2407, C2576–C2609, C2614–C2625, C2619–C2634, C2636–C2645, C2652–C2668, C2662–C2677, C2679–C2688, C2868–C2895, C2900–C2911, C2905–C2920, C2922–C2931, C2937–C2948, C2942–C2958, and C2960–C2969. Residues 2419-2609 form the Laminin G-like 3 domain; the sequence is SGTDAFGYTS…PNAGRSVGQC (191 aa). 2 consecutive EGF-like domains span residues 2610–2646 and 2648–2689; these read HASP…SFCT and TVST…IYCE. The region spanning 2717 to 2895 is the Laminin G-like 4 domain; it reads DPSFRSNELS…AKGGSNVGDC (179 aa). 2 consecutive EGF-like domains span residues 2896 to 2932 and 2933 to 2970; these read DGTA…NTCN and QSVS…RYCE. The Laminin G-like 5 domain occupies 2975–3165; it reads FSTAKFMGNS…YDGDEQNEVT (191 aa).

Belongs to the EYS family. Expressed in retina (at protein level). Isoform 1: Detected in retina. Isoform 2: Detected in retina. Isoform 3: Strongly expressed in retina and testis. Isoform 4: Strongly expressed in testis, and weakly expressed in retina.

It is found in the cell projection. The protein localises to the cilium. Its subcellular location is the photoreceptor outer segment. The protein resides in the cytoplasm. It localises to the cytoskeleton. It is found in the cilium axoneme. The protein localises to the microtubule organizing center. Its subcellular location is the centrosome. The protein resides in the secreted. It localises to the extracellular space. It is found in the extracellular matrix. The protein localises to the interphotoreceptor matrix. Required to maintain the integrity of photoreceptor cells. Specifically required for normal morphology of the photoreceptor ciliary pocket, and might thus facilitate protein trafficking between the photoreceptor inner and outer segments via the transition zone. The protein is Protein eyes shut homolog (EYS) of Homo sapiens (Human).